The following is a 517-amino-acid chain: ATP synthase subunit alpha (517 aa).

Gly174–Thr181 provides a ligand contact to ATP.

This sequence belongs to the ATPase alpha/beta chains family. As to quaternary structure, F-type ATPases have 2 components, CF(1) - the catalytic core - and CF(0) - the membrane proton channel. CF(1) has five subunits: alpha(3), beta(3), gamma(1), delta(1), epsilon(1). CF(0) has three main subunits: a(1), b(2) and c(9-12). The alpha and beta chains form an alternating ring which encloses part of the gamma chain. CF(1) is attached to CF(0) by a central stalk formed by the gamma and epsilon chains, while a peripheral stalk is formed by the delta and b chains.

Its subcellular location is the cell inner membrane. The enzyme catalyses ATP + H2O + 4 H(+)(in) = ADP + phosphate + 5 H(+)(out). Functionally, produces ATP from ADP in the presence of a proton gradient across the membrane. The alpha chain is a regulatory subunit. This Delftia acidovorans (strain DSM 14801 / SPH-1) protein is ATP synthase subunit alpha.